We begin with the raw amino-acid sequence, 353 residues long: MEDGVLKEGFLVKRGHIVHNWKARWFILRQNTLLYYKLEGGRRVTPPKGRIVLDGCTITCPCLEYENRPLLIKLKTRTSTEYFLEACSREERDSWAFEITGAIHAGQPGKIQQLHILKNSFKLPPHISLHRIVDKMHDTSTGIRPSPNMEQGSTYKKTFLGSSLVDWLISSNFAASRLEAVTLASMLMEENFLRPVGVRSMGAIRSGDLAEQFLDDSTALYTFAESYKKKVSSKEEISLSTMELSGTVVKQGYLSKQGHKRKNWKVRRFVLRKDPAFLHYYDPSKEENRPVGGFSLRGSLVSALEDNGVPTGVKGNVQGNLFKVITKDDTHYYIQASSKAERAEWIEAIKKLT.

Residue Met-1 is modified to N-acetylmethionine. In terms of domain architecture, PH 1 spans 4 to 104 (GVLKEGFLVK…WAFEITGAIH (101 aa)). The residue at position 120 (Ser-120) is a Phosphoserine. Residues 139-225 (TSTGIRPSPN…DSTALYTFAE (87 aa)) form the DEP domain. Residues 247–353 (TVVKQGYLSK…EWIEAIKKLT (107 aa)) enclose the PH 2 domain.

Ubiquitous. Most abundant in the thymus, large bowel, small bowel, stomach, and prostate.

The protein resides in the cell projection. It is found in the lamellipodium membrane. The protein localises to the cytoplasm. It localises to the cytoskeleton. May help orchestrate cytoskeletal arrangement. Contribute to lamellipodia formation. Overexpression of pleckstrin 2 causes large lamellipodia and peripheral ruffle formation. This is Pleckstrin-2 (Plek2) from Mus musculus (Mouse).